Reading from the N-terminus, the 230-residue chain is Ribose-5-phosphate isomerase A (230 aa).

Residues S29–T32, D86–D89, and K99–G102 contribute to the substrate site. E108 acts as the Proton acceptor in catalysis. A substrate-binding site is contributed by K126.

The protein belongs to the ribose 5-phosphate isomerase family. In terms of assembly, homodimer.

The catalysed reaction is aldehydo-D-ribose 5-phosphate = D-ribulose 5-phosphate. It functions in the pathway carbohydrate degradation; pentose phosphate pathway; D-ribose 5-phosphate from D-ribulose 5-phosphate (non-oxidative stage): step 1/1. In terms of biological role, catalyzes the reversible conversion of ribose-5-phosphate to ribulose 5-phosphate. The chain is Ribose-5-phosphate isomerase A from Desulfatibacillum aliphaticivorans.